The following is a 325-amino-acid chain: NADH-quinone oxidoreductase subunit H (325 aa).

Transmembrane regions (helical) follow at residues 11-31 (ILIS…CGAF), 81-101 (AIFT…FAIV), 114-134 (IGIL…LFAG), 154-174 (LSYE…AGSF), 186-206 (VWNV…GVAV), 237-257 (FFVG…TLFF), 265-285 (LPPF…FILI), and 304-324 (VCLP…LYNA).

It belongs to the complex I subunit 1 family. In terms of assembly, NDH-1 is composed of 13 different subunits. Subunits NuoA, H, J, K, L, M, N constitute the membrane sector of the complex.

It localises to the cell inner membrane. The enzyme catalyses a quinone + NADH + 5 H(+)(in) = a quinol + NAD(+) + 4 H(+)(out). NDH-1 shuttles electrons from NADH, via FMN and iron-sulfur (Fe-S) centers, to quinones in the respiratory chain. The immediate electron acceptor for the enzyme in this species is believed to be ubiquinone. Couples the redox reaction to proton translocation (for every two electrons transferred, four hydrogen ions are translocated across the cytoplasmic membrane), and thus conserves the redox energy in a proton gradient. This subunit may bind ubiquinone. The protein is NADH-quinone oxidoreductase subunit H of Yersinia pseudotuberculosis serotype O:1b (strain IP 31758).